The chain runs to 1081 residues: FHF complex subunit HOOK-interacting protein 1A (1081 aa).

Disordered regions lie at residues 474–496 (SEEQ…PPPA), 544–623 (PETF…DPPK), 658–770 (EKDT…ENEP), and 863–883 (EAGS…RHPV). Residues 486–496 (PSSPSPPPPPA) show a composition bias toward pro residues. Residues 553-564 (EESRENSGHPEA) show a composition bias toward basic and acidic residues. A compositionally biased stretch (polar residues) spans 567–576 (PQQSVRTSGQ). The segment covering 680–707 (EPLEDTSEQQEDTSEQLEDTSELQEDTA) has biased composition (acidic residues). Composition is skewed to polar residues over residues 727-738 (EAQSLPTSNGPL) and 746-762 (ESQP…NTFS).

Belongs to the FHIP family. May be a component of the FTS/Hook/FHIP complex (FHF complex), composed of AKTIP/FTS, FHIP1B, and one or more members of the Hook family of proteins HOOK1, HOOK2, and HOOK3. May interact directly with AKTIP/FTS.

Functionally, probable component of the FTS/Hook/FHIP complex (FHF complex). FHF complex promotes the distribution of AP-4 complex to the perinuclear area of the cell. This is FHF complex subunit HOOK-interacting protein 1A from Mus musculus (Mouse).